We begin with the raw amino-acid sequence, 733 residues long: DNA repair and recombination protein RAD54-like (733 aa).

Residues 1-35 (LAKRKAGGEEEDGEWRPPATQKRQKAGSEAESADC) form a disordered region. In terms of domain architecture, Helicase ATP-binding spans 159–334 (SRRIPGSHGC…FSLVHFVNSG (176 aa)). 172–179 (DEMGLGKT) serves as a coordination point for ATP. Positions 285 to 288 (DEGH) match the DEGH box motif. Residues 488 to 642 (LVLDYILAVT…CVVDEEQDVE (155 aa)) enclose the Helicase C-terminal domain. Residue Lys504 is modified to N6-acetyllysine. Residue Ser561 is modified to Phosphoserine; by NEK1.

The protein belongs to the SNF2/RAD54 helicase family. Homohexamer. Interacts (via N-terminus) with RAD51. Interacts with NAP1L1. Interacts with BRD9; this interaction orchestrates RAD51-RAD54 complex formation. Acetylated. Acetylation promotes interaction with BRD9, and subsequently with RAD54, which is essential for homologous recombination (HR). In terms of processing, phosphorylated. Phosphorylation at Ser-561 by NEK1 specifically in G2 phase allows efficient removal of RAD51 filaments from DNA. Highly expressed in bursa, thymus, testis, and ovary. Low level of expression seen in all other organs tested.

Its subcellular location is the nucleus. Functionally, plays an essential role in homologous recombination (HR) which is a major pathway for repairing DNA double-strand breaks (DSBs), single-stranded DNA (ssDNA) gaps, and stalled or collapsed replication forks. Acts as a molecular motor during the homology search and guides RAD51 ssDNA along a donor dsDNA thereby changing the homology search from the diffusion-based mechanism to a motor-guided mechanism. Plays also an essential role in RAD51-mediated synaptic complex formation which consists of three strands encased in a protein filament formed once homology is recognized. Once DNA strand exchange occured, dissociates RAD51 from nucleoprotein filaments formed on dsDNA. The protein is DNA repair and recombination protein RAD54-like (RAD54L) of Gallus gallus (Chicken).